The following is a 623-amino-acid chain: tRNA uridine 5-carboxymethylaminomethyl modification enzyme MnmG (623 aa).

10–15 (GGGHAG) is an FAD binding site. 269 to 283 (GPRYCPSIEDKIVRF) is an NAD(+) binding site.

The protein belongs to the MnmG family. As to quaternary structure, homodimer. Heterotetramer of two MnmE and two MnmG subunits. FAD serves as cofactor.

Its subcellular location is the cytoplasm. NAD-binding protein involved in the addition of a carboxymethylaminomethyl (cmnm) group at the wobble position (U34) of certain tRNAs, forming tRNA-cmnm(5)s(2)U34. The polypeptide is tRNA uridine 5-carboxymethylaminomethyl modification enzyme MnmG (Rhizobium meliloti (strain 1021) (Ensifer meliloti)).